The primary structure comprises 270 residues: 3-methyl-2-oxobutanoate hydroxymethyltransferase (270 aa).

Residues Asp-50 and Asp-89 each contribute to the Mg(2+) site. Residues 50 to 51 (DS), Asp-89, and Lys-118 each bind 3-methyl-2-oxobutanoate. Glu-120 is a Mg(2+) binding site. Glu-187 (proton acceptor) is an active-site residue.

Belongs to the PanB family. In terms of assembly, homodecamer; pentamer of dimers. The cofactor is Mg(2+).

Its subcellular location is the cytoplasm. The catalysed reaction is 3-methyl-2-oxobutanoate + (6R)-5,10-methylene-5,6,7,8-tetrahydrofolate + H2O = 2-dehydropantoate + (6S)-5,6,7,8-tetrahydrofolate. It participates in cofactor biosynthesis; (R)-pantothenate biosynthesis; (R)-pantoate from 3-methyl-2-oxobutanoate: step 1/2. In terms of biological role, catalyzes the reversible reaction in which hydroxymethyl group from 5,10-methylenetetrahydrofolate is transferred onto alpha-ketoisovalerate to form ketopantoate. The sequence is that of 3-methyl-2-oxobutanoate hydroxymethyltransferase from Helicobacter pylori (strain Shi470).